We begin with the raw amino-acid sequence, 94 residues long: Small ribosomal subunit protein uS19 (94 aa).

The protein belongs to the universal ribosomal protein uS19 family.

Protein S19 forms a complex with S13 that binds strongly to the 16S ribosomal RNA. The protein is Small ribosomal subunit protein uS19 of Endomicrobium trichonymphae.